The sequence spans 131 residues: Lysosomal enzyme trafficking factor (131 aa).

2 helical membrane passes run 8 to 28 and 66 to 86; these read MGWI…YYVF and LPFW…FLFL.

This sequence belongs to the LYSET family.

It localises to the golgi apparatus membrane. Required for mannose-6-phosphate-dependent trafficking of lysosomal enzymes. LYSET bridges GlcNAc-1-phosphate transferase (GNPTAB), to the membrane-bound transcription factor site-1 protease (MBTPS1), thus allowing proteolytic activation of the GNPTAB. GNPTAB is involved in the regulation of M6P-dependent Golgi-to-lysosome trafficking of lysosomal enzymes. LYSET is thus an essential factor for maturation and delivery of lysosomal hydrolases. The sequence is that of Lysosomal enzyme trafficking factor (lyset-b) from Xenopus laevis (African clawed frog).